A 335-amino-acid polypeptide reads, in one-letter code: tRNA N6-adenosine threonylcarbamoyltransferase (335 aa).

Residues His110 and His114 each coordinate Fe cation. Substrate is bound by residues 132–136 (LVSGG), Asp165, Gly178, and Asn271. A Fe cation-binding site is contributed by Asp299.

This sequence belongs to the KAE1 / TsaD family. Fe(2+) serves as cofactor.

It is found in the cytoplasm. It catalyses the reaction L-threonylcarbamoyladenylate + adenosine(37) in tRNA = N(6)-L-threonylcarbamoyladenosine(37) in tRNA + AMP + H(+). In terms of biological role, required for the formation of a threonylcarbamoyl group on adenosine at position 37 (t(6)A37) in tRNAs that read codons beginning with adenine. Is involved in the transfer of the threonylcarbamoyl moiety of threonylcarbamoyl-AMP (TC-AMP) to the N6 group of A37, together with TsaE and TsaB. TsaD likely plays a direct catalytic role in this reaction. The protein is tRNA N6-adenosine threonylcarbamoyltransferase of Campylobacter jejuni subsp. doylei (strain ATCC BAA-1458 / RM4099 / 269.97).